Here is a 560-residue protein sequence, read N- to C-terminus: MARPDDEVGPAVAPGHPLGKGYLPVPKGAPDGEARLVPQNGPEALNGGPGLGPLIAGAQGGPQALIAAEEETQARLLPAGDGEDVPCPACPPRTALSPRRFVVLLIFSLYSLVNAFQWIQYSSISNVFEDFYEVSPLHINWLSMVYMVAYVPLIFPATWLLDTRGLRLTALLGSGLNCLGAWVKCGSVQRHLFWVTMLGQILCSVAQVFILGLPSPVASVWFGPKEVSTACATAVLGNQLGTAVGFLLPPVLVPALGTQNSTGLLAHTQNNTDLLAHNINTMFYGTAFISTFLFFLTIIAFKEKPPLPPSQAQAVLRDSPPEEYSYKSSIWNLCRNIPFVLLLVSYGIMTGAFYSISTLLNQIILTYYVGEEVNAGRIGLTLVVAGMVGSILCGLWLDYTKTYKQTTLIVYVLSFIGMLIFTFTLNLGYIIVVFFTGGILGFFMTGYLPLGFEFAVEITYPESEGMSSGLLNTAAQILGIFFTLAQGKITTDYNSPEAGNIFLCAWMFVGIILTALIKSDLRRHNINTGLTNIDVKAVPVDSRVDPKPKVMVSIQSESSL.

Residues 1–43 (MARPDDEVGPAVAPGHPLGKGYLPVPKGAPDGEARLVPQNGPE) form a disordered region. Residues 1–92 (MARPDDEVGP…EDVPCPACPP (92 aa)) lie on the Cytoplasmic side of the membrane. Residues 93–117 (RTALSPRRFVVLLIFSLYSLVNAFQ) form a helical membrane-spanning segment. The Extracellular portion of the chain corresponds to 118 to 135 (WIQYSSISNVFEDFYEVS). A helical membrane pass occupies residues 136–163 (PLHINWLSMVYMVAYVPLIFPATWLLDT). Topologically, residues 164 to 165 (RG) are cytoplasmic. A helical membrane pass occupies residues 166–185 (LRLTALLGSGLNCLGAWVKC). Residues 186-192 (GSVQRHL) are Extracellular-facing. The chain crosses the membrane as a helical span at residues 193–221 (FWVTMLGQILCSVAQVFILGLPSPVASVW). Gln207 serves as a coordination point for ethanolamine. Residues 222–226 (FGPKE) are Cytoplasmic-facing. Residues 227-252 (VSTACATAVLGNQLGTAVGFLLPPVL) traverse the membrane as a helical segment. The Extracellular segment spans residues 253-270 (VPALGTQNSTGLLAHTQN). The N-linked (GlcNAc...) asparagine glycan is linked to Asn270. A helical membrane pass occupies residues 271–300 (NTDLLAHNINTMFYGTAFISTFLFFLTIIA). The Cytoplasmic segment spans residues 301-336 (FKEKPPLPPSQAQAVLRDSPPEEYSYKSSIWNLCRN). Residues 337–367 (IPFVLLLVSYGIMTGAFYSISTLLNQIILTY) form a helical membrane-spanning segment. Residues 368 to 371 (YVGE) lie on the Extracellular side of the membrane. The helical transmembrane segment at 372-400 (EVNAGRIGLTLVVAGMVGSILCGLWLDYT) threads the bilayer. Topologically, residues 401-402 (KT) are cytoplasmic. A helical membrane pass occupies residues 403-425 (YKQTTLIVYVLSFIGMLIFTFTL). Over 426–428 (NLG) the chain is Extracellular. Residues 429–458 (YIIVVFFTGGILGFFMTGYLPLGFEFAVEI) traverse the membrane as a helical segment. Residues 459-466 (TYPESEGM) are Cytoplasmic-facing. A helical transmembrane segment spans residues 467-492 (SSGLLNTAAQILGIFFTLAQGKITTD). Gln476 serves as a coordination point for ethanolamine. Gln476 provides a ligand contact to choline. The Extracellular portion of the chain corresponds to 493-495 (YNS). A helical transmembrane segment spans residues 496–518 (PEAGNIFLCAWMFVGIILTALIK). Residues 519 to 560 (SDLRRHNINTGLTNIDVKAVPVDSRVDPKPKVMVSIQSESSL) are Cytoplasmic-facing. Residue Ser542 is modified to Phosphoserine.

The protein belongs to the major facilitator superfamily. Feline leukemia virus subgroup C receptor (TC 2.A.1.28.1) family.

It is found in the cell membrane. It localises to the mitochondrion membrane. It carries out the reaction choline(out) = choline(in). It catalyses the reaction ethanolamine(in) = ethanolamine(out). The catalysed reaction is heme b(in) = heme b(out). Its function is as follows. Uniporter that mediates the transport of extracellular choline and ethanolamine into cells, thereby playing a key role in phospholipid biosynthesis. Choline and ethanolamine are the precursors of phosphatidylcholine and phosphatidylethanolamine, respectively, the two most abundant phospholipids. Transport is not coupled with proton transport and is exclusively driven by the choline (or ethanolamine) gradient across the plasma membrane. Also acts as a heme b transporter that mediates heme efflux from the cytoplasm to the extracellular compartment. In terms of biological role, uniporter that mediates the transport of extracellular choline and ethanolamine into cells. Choline and ethanolamine are the precursors of phosphatidylcholine and phosphatidylethanolamine, respectively, the two most abundant phospholipids. Transport is not coupled with proton transport and is exclusively driven by the choline (or ethanolamine) gradient across the plasma membrane. Also acts as a heme b transporter that mediates heme efflux from the cytoplasm to the extracellular compartment. Heme export depends on the presence of HPX and is required to maintain intracellular free heme balance, protecting cells from heme toxicity. Heme export provides protection from heme or ferrous iron toxicities in liver, brain, sensory neurons and during erythropoiesis, a process in which heme synthesis intensifies. Possibly export coproporphyrin and protoporphyrin IX, which are both intermediate products in the heme biosynthetic pathway. Does not export bilirubin. The molecular mechanism of heme transport, whether electrogenic, electroneutral or coupled to other ions, remains to be elucidated. Heme transporter that promotes heme efflux from the mitochondrion to the cytoplasm. Essential for erythroid differentiation. This is Choline/ethanolamine transporter FLVCR1 (Flvcr1) from Mus musculus (Mouse).